A 375-amino-acid polypeptide reads, in one-letter code: Deoxyhypusine synthase-like protein (375 aa).

The protein belongs to the deoxyhypusine synthase family.

This chain is Deoxyhypusine synthase-like protein, found in Elusimicrobium minutum (strain Pei191).